The chain runs to 434 residues: MAVQESAAQLSMTLKVQEYPTLKVPYETLNKRFRAAQKNIDRETSHVTMVVAELEKTLSGCPAVDSVVSLLDGVVEKLSVLKRKAVESIQAEDESAKLCKRRIEHLKEHSSDQPAAASVWKRKRMDRMMVEHLLRCGYYNTAVKLARQSGIEDLVNIEMFLTAKEVEESLERRETATCLAWCHDNKSRLRKMKGRQSEHDAKTGRKSRVASGSPKESEDLGMETIKGKPELSCLEFSLRIQEFIELIRQNKRLDAVRHARKHFSQAEGSQLDEVRQVMGMLAFPPDTHISPYKDLLDPARWRMLIQQFRYDNYRLHQLGNSSVFTLTLQAGLSAIKTPQCYKEDGSSRSPDCPVCSRSLNKLAQPLPMAHCANSRLVCKISGDVMNENNPPMMLPNGYVYGYNSLLSIRQDDKVVCPRTKEVFHFSQAEKVYIM.

The interval 1-124 (MAVQESAAQL…AAASVWKRKR (124 aa)) is extracellular and involved in cell to cell contact. Position 28 is a phosphothreonine (Thr-28). Residues 121 to 153 (KRKRMDRMMVEHLLRCGYYNTAVKLARQSGIED) enclose the LisH domain. Residues 159-254 (MFLTAKEVEE…ELIRQNKRLD (96 aa)) enclose the CTLH domain. A disordered region spans residues 190–222 (RKMKGRQSEHDAKTGRKSRVASGSPKESEDLGM). The RING-Gid-type zinc-finger motif lies at 352–419 (CPVCSRSLNK…QDDKVVCPRT (68 aa)).

In terms of assembly, identified in the CTLH complex that contains GID4, RANBP9 and/or RANBP10, MKLN1, MAEA, RMND5A (or alternatively its paralog RMND5B), GID8, ARMC8, WDR26 and YPEL5. Within this complex, MAEA, RMND5A (or alternatively its paralog RMND5B), GID8, WDR26, and RANBP9 and/or RANBP10 form the catalytic core, while GID4, MKLN1, ARMC8 and YPEL5 have ancillary roles. Interacts with F-actin. In terms of processing, autoubiquitinated as component of the CTLH E3 ubiquitin-protein ligase complex (in vitro).

The protein resides in the cytoplasm. The protein localises to the nucleus. It is found in the nucleoplasm. Its subcellular location is the nucleus matrix. It localises to the cell membrane. The protein resides in the cytoskeleton. The enzyme catalyses S-ubiquitinyl-[E2 ubiquitin-conjugating enzyme]-L-cysteine + [acceptor protein]-L-lysine = [E2 ubiquitin-conjugating enzyme]-L-cysteine + N(6)-ubiquitinyl-[acceptor protein]-L-lysine.. In terms of biological role, core component of the CTLH E3 ubiquitin-protein ligase complex that selectively accepts ubiquitin from UBE2H and mediates ubiquitination and subsequent proteasomal degradation of the transcription factor HBP1. MAEA and RMND5A are both required for catalytic activity of the CTLH E3 ubiquitin-protein ligase complex. MAEA is required for normal cell proliferation. The CTLH E3 ubiquitin-protein ligase complex is not required for the degradation of enzymes involved in gluconeogenesis, such as FBP1. Plays a role in erythroblast enucleation during erythrocyte maturation and in the development of mature macrophages. Mediates the attachment of erythroid cell to mature macrophages; this MAEA-mediated contact inhibits erythroid cell apoptosis. Participates in erythroblastic island formation, which is the functional unit of definitive erythropoiesis. Associates with F-actin to regulate actin distribution in erythroblasts and macrophages. May contribute to nuclear architecture and cells division events. This is E3 ubiquitin-protein transferase MAEA (MAEA) from Bos taurus (Bovine).